A 369-amino-acid chain; its full sequence is Chorismate synthase (369 aa).

NADP(+) contacts are provided by arginine 48 and arginine 54. FMN contacts are provided by residues 125–127 (RSS), 238–239 (NA), glycine 278, 293–297 (KPTSS), and arginine 319.

This sequence belongs to the chorismate synthase family. Homotetramer. The cofactor is FMNH2.

It carries out the reaction 5-O-(1-carboxyvinyl)-3-phosphoshikimate = chorismate + phosphate. It functions in the pathway metabolic intermediate biosynthesis; chorismate biosynthesis; chorismate from D-erythrose 4-phosphate and phosphoenolpyruvate: step 7/7. Catalyzes the anti-1,4-elimination of the C-3 phosphate and the C-6 proR hydrogen from 5-enolpyruvylshikimate-3-phosphate (EPSP) to yield chorismate, which is the branch point compound that serves as the starting substrate for the three terminal pathways of aromatic amino acid biosynthesis. This reaction introduces a second double bond into the aromatic ring system. The polypeptide is Chorismate synthase (Burkholderia pseudomallei (strain 1106a)).